The sequence spans 388 residues: Beta-lactamase (388 aa).

A signal peptide spans 1–24 (MMKKSIINTLIFTSIATFPLYTLA). Residue serine 89 is the Acyl-ester intermediate of the active site. The active-site Proton acceptor is tyrosine 175. Position 342-344 (342-344 (KTG)) interacts with substrate.

The protein belongs to the class-C beta-lactamase family.

It is found in the periplasm. It carries out the reaction a beta-lactam + H2O = a substituted beta-amino acid. Its function is as follows. This protein is a serine beta-lactamase with a substrate specificity for cephalosporins. This Yersinia enterocolitica protein is Beta-lactamase (ampC).